We begin with the raw amino-acid sequence, 189 residues long: Ribosome maturation factor RimP (189 aa).

The protein belongs to the RimP family.

It localises to the cytoplasm. Functionally, required for maturation of 30S ribosomal subunits. The chain is Ribosome maturation factor RimP from Mycobacteroides abscessus (strain ATCC 19977 / DSM 44196 / CCUG 20993 / CIP 104536 / JCM 13569 / NCTC 13031 / TMC 1543 / L948) (Mycobacterium abscessus).